A 148-amino-acid polypeptide reads, in one-letter code: UPF0178 protein EF_0842 (148 aa).

Belongs to the UPF0178 family.

The chain is UPF0178 protein EF_0842 from Enterococcus faecalis (strain ATCC 700802 / V583).